The following is a 177-amino-acid chain: Calerythrin (177 aa).

EF-hand domains follow at residues 5-40, 45-90, 100-134, and 134-169; these read IASD…IAEA, AGAA…NLIF, VLGP…ALGM, and MSKA…FHFG. Ca(2+) contacts are provided by Asp18, Asp20, Asn22, and Asp29. The Ca(2+) site is built by Asp113, Asn115, Asp117, Gln119, Glu124, Asp147, Asn149, Asn151, Glu153, and Glu158.

In Saccharopolyspora erythraea (Streptomyces erythraeus), this protein is Calerythrin.